Here is a 559-residue protein sequence, read N- to C-terminus: 3-phosphoinositide-dependent protein kinase 1 (559 aa).

Y9 carries the phosphotyrosine; by SRC and INSR modification. S25 bears the Phosphoserine mark. The segment at 25-83 is disordered; sequence SPSMVRSQTEPSSSPGIPSGVSRQGSTMDGTTAEARPSTNPLQQHPAQLPPQPRKKRPE. Low complexity predominate over residues 35–46; the sequence is PSSSPGIPSGVS. The 261-residue stretch at 85 to 345 folds into the Protein kinase domain; sequence FKFGKILGEG…YGPLKAHPFF (261 aa). ATP-binding positions include 95-97 and K114; that span reads SFS. Residues 116 to 160 are PIF-pocket; the sequence is LEKRHIIKENKVPYVTRERDVMSRLDHPFFVKLYFTFQDDEKLYF. Residues 163–165 and E169 each bind ATP; that span reads SYA. D208 (proton acceptor) is an active-site residue. ATP is bound by residues E212 and D226. S244 carries the post-translational modification Phosphoserine. An N6-acetyllysine modification is found at K307. T357 carries the post-translational modification Phosphothreonine; by MELK. Y376 and Y379 each carry phosphotyrosine; by SRC and INSR. Position 396 is a phosphoserine (S396). Phosphoserine; by MAP3K5 is present on S397. S399 is modified (phosphoserine). S401 is subject to Phosphoserine; by MAP3K5. S413 is subject to Phosphoserine. Residues 462 to 553 enclose the PH domain; sequence KMGPVDKRKG…EVWRQQYQSS (92 aa). At S504 the chain carries Phosphoserine; by PKC/PRKCQ. The residue at position 516 (T516) is a Phosphothreonine; by autocatalysis. S532 bears the Phosphoserine; by PKC/PRKCQ mark.

This sequence belongs to the protein kinase superfamily. AGC Ser/Thr protein kinase family. PDPK1 subfamily. In terms of assembly, homodimer in its autoinhibited state. Active as monomer. Interacts with NPRL2, PPARG, PAK1, PTK2B, GRB14, PKN1 (via C-terminus), STRAP and IKKB. The Tyr-9 phosphorylated form interacts with SRC, RASA1 and CRK (via their SH2 domains). Interacts with SGK3 in a phosphorylation-dependent manner. The tyrosine-phosphorylated form interacts with PTPN6. The Ser-244 phosphorylated form interacts with YWHAH and YWHAQ. Binds INSR in response to insulin. Interacts (via PH domain) with SMAD3, SMAD4 and SMAD7. Interacts with PKN2; the interaction stimulates PDPK1 autophosphorylation, its PI(3,4,5)P3-dependent kinase activity toward 'Ser-473' of AKT1 but also activates its kinase activity toward PRKCD and PRKCZ. In terms of processing, phosphorylation on Ser-244 in the activation loop is required for full activity. PDPK1 itself can autophosphorylate Ser-244, leading to its own activation. Autophosphorylation is inhibited by the apoptotic C-terminus cleavage product of PKN2. Tyr-9 phosphorylation is critical for stabilization of both PDPK1 and the PDPK1/SRC complex via HSP90-mediated protection of PDPK1 degradation. Angiotensin II stimulates the tyrosine phosphorylation of PDPK1 in vascular smooth muscle in a calcium- and SRC-dependent manner. Phosphorylated on Tyr-9, Tyr-376 and Tyr-379 by INSR in response to insulin. Palmitate negatively regulates autophosphorylation at Ser-244 and palmitate-induced phosphorylation at Ser-532 and Ser-504 by PKC/PRKCQ negatively regulates its ability to phosphorylate PKB/AKT1. Phosphorylation at Thr-357 by MELK partially inhibits kinase activity, the inhibition is cooperatively enhanced by phosphorylation at Ser-397 and Ser-401 by MAP3K5. Monoubiquitinated in the kinase domain, deubiquitinated by USP4.

It localises to the cytoplasm. The protein localises to the nucleus. Its subcellular location is the cell membrane. The protein resides in the cell junction. It is found in the focal adhesion. The catalysed reaction is L-seryl-[protein] + ATP = O-phospho-L-seryl-[protein] + ADP + H(+). The enzyme catalyses L-threonyl-[protein] + ATP = O-phospho-L-threonyl-[protein] + ADP + H(+). With respect to regulation, homodimerization regulates its activity by maintaining the kinase in an autoinhibitory conformation. NPRL2 down-regulates its activity by interfering with tyrosine phosphorylation at the Tyr-9, Tyr-376 and Tyr-379 residues. The 14-3-3 protein YWHAQ acts as a negative regulator by association with the residues surrounding the Ser-244 residue. STRAP positively regulates its activity by enhancing its autophosphorylation and by stimulating its dissociation from YWHAQ. SMAD2, SMAD3, SMAD4 and SMAD7 also positively regulate its activity by stimulating its dissociation from YWHAQ. Activated by phosphorylation on Tyr-9, Tyr-376 and Tyr-379 by INSR in response to insulin. Its function is as follows. Serine/threonine kinase which acts as a master kinase, phosphorylating and activating a subgroup of the AGC family of protein kinases. Its targets include: protein kinase B (PKB/AKT1, PKB/AKT2, PKB/AKT3), p70 ribosomal protein S6 kinase (RPS6KB1), p90 ribosomal protein S6 kinase (RPS6KA1, RPS6KA2 and RPS6KA3), cyclic AMP-dependent protein kinase (PRKACA), protein kinase C (PRKCD and PRKCZ), serum and glucocorticoid-inducible kinase (SGK1, SGK2 and SGK3), p21-activated kinase-1 (PAK1), TSSK3, protein kinase PKN (PKN1 and PKN2). Plays a central role in the transduction of signals from insulin by providing the activating phosphorylation to PKB/AKT1, thus propagating the signal to downstream targets controlling cell proliferation and survival, as well as glucose and amino acid uptake and storage. Negatively regulates the TGF-beta-induced signaling by: modulating the association of SMAD3 and SMAD7 with TGF-beta receptor, phosphorylating SMAD2, SMAD3, SMAD4 and SMAD7, preventing the nuclear translocation of SMAD3 and SMAD4 and the translocation of SMAD7 from the nucleus to the cytoplasm in response to TGF-beta. Activates PPARG transcriptional activity and promotes adipocyte differentiation. Activates the NF-kappa-B pathway via phosphorylation of IKKB. The tyrosine phosphorylated form is crucial for the regulation of focal adhesions by angiotensin II. Controls proliferation, survival, and growth of developing pancreatic cells. Participates in the regulation of Ca(2+) entry and Ca(2+)-activated K(+) channels of mast cells. Essential for the motility of vascular endothelial cells (ECs) and is involved in the regulation of their chemotaxis. Plays a critical role in cardiac homeostasis by serving as a dual effector for cell survival and beta-adrenergic response. Plays an important role during thymocyte development by regulating the expression of key nutrient receptors on the surface of pre-T cells and mediating Notch-induced cell growth and proliferative responses. Provides negative feedback inhibition to toll-like receptor-mediated NF-kappa-B activation in macrophages. The protein is 3-phosphoinositide-dependent protein kinase 1 (Pdpk1) of Rattus norvegicus (Rat).